Consider the following 347-residue polypeptide: Quinolinate synthase (347 aa).

Iminosuccinate-binding residues include His-47 and Ser-68. Cys-113 contributes to the [4Fe-4S] cluster binding site. Residues 139 to 141 (YAN) and Ser-156 each bind iminosuccinate. Cys-200 contributes to the [4Fe-4S] cluster binding site. Iminosuccinate-binding positions include 226–228 (HPE) and Thr-243. Residue Cys-297 participates in [4Fe-4S] cluster binding.

Belongs to the quinolinate synthase family. Type 1 subfamily. It depends on [4Fe-4S] cluster as a cofactor.

It is found in the cytoplasm. It carries out the reaction iminosuccinate + dihydroxyacetone phosphate = quinolinate + phosphate + 2 H2O + H(+). Its pathway is cofactor biosynthesis; NAD(+) biosynthesis; quinolinate from iminoaspartate: step 1/1. Catalyzes the condensation of iminoaspartate with dihydroxyacetone phosphate to form quinolinate. This is Quinolinate synthase from Escherichia coli (strain K12 / MC4100 / BW2952).